We begin with the raw amino-acid sequence, 454 residues long: tRNA modification GTPase MnmE (454 aa).

3 residues coordinate (6S)-5-formyl-5,6,7,8-tetrahydrofolate: arginine 26, glutamate 84, and lysine 123. The 160-residue stretch at 219-378 (GLQVVIAGKP…LVDAITAHAG (160 aa)) folds into the TrmE-type G domain. A K(+)-binding site is contributed by asparagine 229. GTP-binding positions include 229–234 (NAGKSS), 248–254 (TDIAGTT), and 273–276 (DTAG). Residue serine 233 coordinates Mg(2+). The K(+) site is built by threonine 248, isoleucine 250, and threonine 253. Threonine 254 contributes to the Mg(2+) binding site. Lysine 454 contributes to the (6S)-5-formyl-5,6,7,8-tetrahydrofolate binding site.

The protein belongs to the TRAFAC class TrmE-Era-EngA-EngB-Septin-like GTPase superfamily. TrmE GTPase family. Homodimer. Heterotetramer of two MnmE and two MnmG subunits. K(+) is required as a cofactor.

Its subcellular location is the cytoplasm. Exhibits a very high intrinsic GTPase hydrolysis rate. Involved in the addition of a carboxymethylaminomethyl (cmnm) group at the wobble position (U34) of certain tRNAs, forming tRNA-cmnm(5)s(2)U34. This is tRNA modification GTPase MnmE from Acinetobacter baumannii (strain AYE).